The sequence spans 453 residues: Ankyrin repeat and SOCS box protein 16 (453 aa).

ANK repeat units lie at residues 56–85, 110–139, 142–171, 175–204, 209–238, 242–279, and 283–312; these read CRDP…AANM, KQTA…ELDA, GGRA…KANV, EGTT…TVNL, SQET…DVGL, QGET…DARA, and KRHT…RAEV. The SOCS box domain maps to 398-450; the sequence is YSSALCMVNQPRQLQHLARLAVRARLGSRCRQGATRLPLPPLLRDYLLLRVEG.

It belongs to the ankyrin SOCS box (ASB) family.

It participates in protein modification; protein ubiquitination. Its function is as follows. May be a substrate-recognition component of a SCF-like ECS (Elongin-Cullin-SOCS-box protein) E3 ubiquitin-protein ligase complex which mediates the ubiquitination and subsequent proteasomal degradation of target proteins. The polypeptide is Ankyrin repeat and SOCS box protein 16 (ASB16) (Homo sapiens (Human)).